A 223-amino-acid chain; its full sequence is F420-dependent NADP reductase (223 aa).

NADP(+) contacts are provided by residues 9–12 (TGDQ), 30–31 (SR), Lys35, Leu75, and Val101.

The protein belongs to the F420-dependent NADP reductase family.

The catalysed reaction is reduced coenzyme F420-(gamma-L-Glu)(n) + NADP(+) = oxidized coenzyme F420-(gamma-L-Glu)(n) + NADPH + 2 H(+). In terms of biological role, catalyzes the reduction of NADP(+) with F420H(2) via hydride transfer, and the reverse reaction, i.e. the reduction of F420 with NADPH. Probably functions in the regeneration of NADPH required in biosynthetic reactions. The protein is F420-dependent NADP reductase (fno) of Methanocaldococcus jannaschii (strain ATCC 43067 / DSM 2661 / JAL-1 / JCM 10045 / NBRC 100440) (Methanococcus jannaschii).